The chain runs to 415 residues: Lysosome-associated membrane glycoprotein 2 (415 aa).

The first 25 residues, 1–25 (MCLSPVKGAKLILIFLFLGAVQSNA), serve as a signal peptide directing secretion. Residues 26–188 (LIVNLTDSKG…SKNEQVCEED (163 aa)) are first lumenal domain. Over 26-379 (LIVNLTDSKG…AQDCSADEDN (354 aa)) the chain is Lumenal. N-linked (GlcNAc...) asparagine glycosylation is found at Asn-29, Asn-45, Asn-54, Asn-57, Asn-97, Asn-115, and Asn-175. A disulfide bridge links Cys-37 with Cys-75. Cys-149 and Cys-185 form a disulfide bridge. Positions 189 to 233 (QTPTTVAPIIHTTAPSTTTTLTPTSTPTPTPTPTPTVGNYSIRNG) are hinge. Positions 202–213 (APSTTTTLTPTS) are enriched in low complexity. The interval 202–227 (APSTTTTLTPTSTPTPTPTPTPTVGN) is disordered. Asn-227, Asn-234, Asn-247, Asn-265, Asn-280, Asn-312, Asn-317, Asn-322, and Asn-361 each carry an N-linked (GlcNAc...) asparagine glycan. The second lumenal domain stretch occupies residues 234-379 (NTTCLLATMG…AQDCSADEDN (146 aa)). Cys-237 and Cys-270 are oxidised to a cystine. An intrachain disulfide couples Cys-336 to Cys-373. A helical transmembrane segment spans residues 380–404 (FLVPIAVGAALGGVLILVLLAYFIG). Residues 405 to 415 (LKRHHTGYEQF) lie on the Cytoplasmic side of the membrane. Residues 406–409 (KRHH) are important for binding and subsequent lysosomal degradation of target proteins.

The protein belongs to the LAMP family. As to quaternary structure, monomer. Forms large homooligomers. Interacts (via its cytoplasmic region) with HSPA8; HSPA8 mediates recruitment of proteins with a KFERQ motif to the surface of the lysosome for chaperone-mediated autophagy. Interacts with HSP90 in the lysosome lumen; this enhances LAMP2 stability. Interacts with MLLT11. Interacts with ABCB9. Interacts with FURIN. Interacts with CT55; this interaction may be important for LAMP2 protein stability. Interacts with TMEM175; inhibiting the proton channel activity of TMEM175. Forms a ternary complex with RAB7A and RUFY4 (via RUN domain); the interaction with RAB7A is mediated by RUFY4 (via RUN and coiled coil domains). Extensively N-glycosylated. Contains a minor proportion of O-linked glycans. Detected in liver and kidney (at protein level). Detected in liver and kidney.

The protein resides in the lysosome membrane. The protein localises to the endosome membrane. It is found in the cytoplasmic vesicle. It localises to the autophagosome membrane. Its subcellular location is the cell membrane. Its function is as follows. Lysosomal membrane glycoprotein which plays an important role in lysosome biogenesis, lysosomal pH regulation and autophagy. Acts as an important regulator of lysosomal lumen pH regulation by acting as a direct inhibitor of the proton channel TMEM175, facilitating lysosomal acidification for optimal hydrolase activity. Plays an important role in chaperone-mediated autophagy, a process that mediates lysosomal degradation of proteins in response to various stresses and as part of the normal turnover of proteins with a long biological half-live. Functions by binding target proteins, such as GAPDH, NLRP3 and MLLT11, and targeting them for lysosomal degradation. In the chaperone-mediated autophagy, acts downstream of chaperones, such as HSPA8/HSC70, which recognize and bind substrate proteins and mediate their recruitment to lysosomes, where target proteins bind LAMP2. Plays a role in lysosomal protein degradation in response to starvation. Required for the fusion of autophagosomes with lysosomes during autophagy. Cells that lack LAMP2 express normal levels of VAMP8, but fail to accumulate STX17 on autophagosomes, which is the most likely explanation for the lack of fusion between autophagosomes and lysosomes. Required for normal degradation of the contents of autophagosomes. Required for efficient MHC class II-mediated presentation of exogenous antigens via its function in lysosomal protein degradation; antigenic peptides generated by proteases in the endosomal/lysosomal compartment are captured by nascent MHC II subunits. Is not required for efficient MHC class II-mediated presentation of endogenous antigens. This is Lysosome-associated membrane glycoprotein 2 (Lamp2) from Mus musculus (Mouse).